A 208-amino-acid chain; its full sequence is Redox-sensing transcriptional repressor Rex (208 aa).

Positions 16–55 (VYSRYLENLYRKGITTVSSADIAQGVGVTSAQVRKDLAYF) form a DNA-binding region, H-T-H motif. 90–95 (GAGNLG) is a binding site for NAD(+).

Belongs to the transcriptional regulatory Rex family. Homodimer.

It is found in the cytoplasm. Functionally, modulates transcription in response to changes in cellular NADH/NAD(+) redox state. In Carboxydothermus hydrogenoformans (strain ATCC BAA-161 / DSM 6008 / Z-2901), this protein is Redox-sensing transcriptional repressor Rex.